The chain runs to 210 residues: Uridine kinase (210 aa).

12–19 is an ATP binding site; that stretch reads GGSGGGKT.

It belongs to the uridine kinase family.

Its subcellular location is the cytoplasm. It carries out the reaction uridine + ATP = UMP + ADP + H(+). The enzyme catalyses cytidine + ATP = CMP + ADP + H(+). Its pathway is pyrimidine metabolism; CTP biosynthesis via salvage pathway; CTP from cytidine: step 1/3. It functions in the pathway pyrimidine metabolism; UMP biosynthesis via salvage pathway; UMP from uridine: step 1/1. The polypeptide is Uridine kinase (Streptococcus uberis (strain ATCC BAA-854 / 0140J)).